The following is a 342-amino-acid chain: DNA-directed RNA polymerase subunit alpha (342 aa).

The tract at residues 1-239 (MTTFLAKNWS…DQLQVFINFQ (239 aa)) is alpha N-terminal domain (alpha-NTD). Residues 254-342 (INPVLLKKVY…SLAKKHEDQY (89 aa)) are alpha C-terminal domain (alpha-CTD).

This sequence belongs to the RNA polymerase alpha chain family. As to quaternary structure, homodimer. The RNAP catalytic core consists of 2 alpha, 1 beta, 1 beta' and 1 omega subunit. When a sigma factor is associated with the core the holoenzyme is formed, which can initiate transcription.

It carries out the reaction RNA(n) + a ribonucleoside 5'-triphosphate = RNA(n+1) + diphosphate. In terms of biological role, DNA-dependent RNA polymerase catalyzes the transcription of DNA into RNA using the four ribonucleoside triphosphates as substrates. The sequence is that of DNA-directed RNA polymerase subunit alpha from Orientia tsutsugamushi (strain Boryong) (Rickettsia tsutsugamushi).